The sequence spans 447 residues: Putative branched-chain amino acid carrier protein SAUSA300_1300 (447 aa).

The next 12 membrane-spanning stretches (helical) occupy residues 6 to 26 (WVIGFTLFAMFFGAGNLIFPP), 40 to 60 (ILAFVLTGIGLPLLGVIVGAL), 74 to 94 (PKFSILFLIIIYLTIGPLFAI), 114 to 134 (SSIALFIFTIIYFIVVLYICL), 143 to 163 (IGSLLTPLLLITILAMIIKGY), 193 to 213 (GYLTMDAIAAIAFSMIVVNAV), 229 to 249 (LTAGLIAAVALIFIYISLGYI), 290 to 310 (LLGIIVALACLTTACGLIVAV), 326 to 346 (FVLVFILMSFIIANQGLNAVI), 350 to 370 (IPVLSIVYPVAITVVLLILIA), 382 to 402 (IPVIIVFILSIFSVISKLGWL), and 417 to 437 (LEWFPVAIIATILGYLVGIFV).

The protein belongs to the branched chain amino acid transporter family.

The protein resides in the cell membrane. Functionally, component of the transport system for branched-chain amino acids (leucine, isoleucine and valine), which is coupled to a proton motive force (Potential). Contributes to NaCl tolerance. The protein is Putative branched-chain amino acid carrier protein SAUSA300_1300 of Staphylococcus aureus (strain USA300).